The following is a 209-amino-acid chain: Uracil phosphoribosyltransferase (209 aa).

5-phospho-alpha-D-ribose 1-diphosphate is bound by residues arginine 79, arginine 104, and 131-139; that span reads DPMLATGNS. Uracil-binding positions include isoleucine 194 and 199 to 201; that span reads GDA. Aspartate 200 is a binding site for 5-phospho-alpha-D-ribose 1-diphosphate.

This sequence belongs to the UPRTase family. It depends on Mg(2+) as a cofactor.

The enzyme catalyses UMP + diphosphate = 5-phospho-alpha-D-ribose 1-diphosphate + uracil. It functions in the pathway pyrimidine metabolism; UMP biosynthesis via salvage pathway; UMP from uracil: step 1/1. Its activity is regulated as follows. Allosterically activated by GTP. Functionally, catalyzes the conversion of uracil and 5-phospho-alpha-D-ribose 1-diphosphate (PRPP) to UMP and diphosphate. The protein is Uracil phosphoribosyltransferase of Rhizobium leguminosarum bv. trifolii (strain WSM2304).